The primary structure comprises 359 residues: 3-dehydroquinate synthase (359 aa).

Residues 71–76 (DGEQHK), 105–109 (GVIGD), 129–130 (TT), Lys-142, and Lys-151 contribute to the NAD(+) site. Zn(2+)-binding residues include Glu-184, His-247, and His-264.

The protein belongs to the sugar phosphate cyclases superfamily. Dehydroquinate synthase family. NAD(+) is required as a cofactor. Requires Co(2+) as cofactor. Zn(2+) serves as cofactor.

Its subcellular location is the cytoplasm. The catalysed reaction is 7-phospho-2-dehydro-3-deoxy-D-arabino-heptonate = 3-dehydroquinate + phosphate. It functions in the pathway metabolic intermediate biosynthesis; chorismate biosynthesis; chorismate from D-erythrose 4-phosphate and phosphoenolpyruvate: step 2/7. Functionally, catalyzes the conversion of 3-deoxy-D-arabino-heptulosonate 7-phosphate (DAHP) to dehydroquinate (DHQ). The sequence is that of 3-dehydroquinate synthase from Chromobacterium violaceum (strain ATCC 12472 / DSM 30191 / JCM 1249 / CCUG 213 / NBRC 12614 / NCIMB 9131 / NCTC 9757 / MK).